The chain runs to 168 residues: Lipoprotein signal peptidase (168 aa).

Helical transmembrane passes span 15-35, 47-67, 75-95, and 107-127; these read WLWLALVVFLADIGIKFIVME, VLPFFNLLYVHNYGAAFSFLS, WLFTGIAFVVTGLLTYWMSKL, and AMIIGGAIGNVFDRMVHGFVV. Catalysis depends on residues aspartate 128 and aspartate 146. The chain crosses the membrane as a helical span at residues 141-161; the sequence is AFNLADTAICLGAAMIILDGF.

The protein belongs to the peptidase A8 family.

Its subcellular location is the cell inner membrane. It catalyses the reaction Release of signal peptides from bacterial membrane prolipoproteins. Hydrolyzes -Xaa-Yaa-Zaa-|-(S,diacylglyceryl)Cys-, in which Xaa is hydrophobic (preferably Leu), and Yaa (Ala or Ser) and Zaa (Gly or Ala) have small, neutral side chains.. It functions in the pathway protein modification; lipoprotein biosynthesis (signal peptide cleavage). Its function is as follows. This protein specifically catalyzes the removal of signal peptides from prolipoproteins. In Vibrio vulnificus (strain CMCP6), this protein is Lipoprotein signal peptidase.